Here is a 202-residue protein sequence, read N- to C-terminus: MNKINESQLEMDEISKKELHESIIESLLFVSGEPLKLKQISAILECTTKRAQEVLNNMMLKYNDNCRGVKLININDSYQLVTKNENSDYVRKLLKTNTRQALSQAALETLAIIAYKQPITRIDVDEIRGVKSDRAILTLQEKKLIQECGRLDVPGRPILYETTDEFLKNFNLGNIDELPPMEQIASELDEVAVDEEVKEGTE.

It belongs to the ScpB family. As to quaternary structure, homodimer. Homodimerization may be required to stabilize the binding of ScpA to the Smc head domains. Component of a cohesin-like complex composed of ScpA, ScpB and the Smc homodimer, in which ScpA and ScpB bind to the head domain of Smc. The presence of the three proteins is required for the association of the complex with DNA.

It localises to the cytoplasm. In terms of biological role, participates in chromosomal partition during cell division. May act via the formation of a condensin-like complex containing Smc and ScpA that pull DNA away from mid-cell into both cell halves. The polypeptide is Segregation and condensation protein B (Clostridium acetobutylicum (strain ATCC 824 / DSM 792 / JCM 1419 / IAM 19013 / LMG 5710 / NBRC 13948 / NRRL B-527 / VKM B-1787 / 2291 / W)).